The sequence spans 507 residues: Hippocampus abundant transcript-like protein 1 (507 aa).

Residues 1–27 form a disordered region; the sequence is MSTDGESPEEPRWKAVASPKASTMPEK. Over 1-51 the chain is Extracellular; that stretch reads MSTDGESPEEPRWKAVASPKASTMPEKRGSAQAASGSWLQGFGHPSVYHAA. The helical transmembrane segment at 52-72 threads the bilayer; sequence FVIFLEFFAWGLLTTPMLTVL. Residues 73–84 lie on the Cytoplasmic side of the membrane; it reads HETFPQHTFLMN. The chain crosses the membrane as a helical span at residues 85–105; sequence GLIQGVKGLLSFLSAPLIGAL. The Extracellular portion of the chain corresponds to 106–113; that stretch reads SDVWGRKP. A helical membrane pass occupies residues 114–134; sequence FLLGTVFFTCFPIPLMRINPW. Topologically, residues 135-136 are cytoplasmic; the sequence is WY. Residues 137 to 157 traverse the membrane as a helical segment; sequence FGMISVSGVFSVTFSVIFAYV. Residues 158-170 are Extracellular-facing; sequence ADFTQEHERSTAY. A helical membrane pass occupies residues 171–191; it reads GWVSATFAASLVSSPAIGTYL. Over 192-198 the chain is Cytoplasmic; sequence SANYGDS. The helical transmembrane segment at 199 to 219 threads the bilayer; it reads LVVLVATLVALLDICFILIAV. Topologically, residues 220 to 257 are extracellular; that stretch reads PESLSEKIRPASWGAQISWKQADPFASLKKVGKDSTVL. A helical transmembrane segment spans residues 258 to 278; it reads LICITVFLSYLPEAGQYSSFF. Residues 279–283 are Cytoplasmic-facing; the sequence is LYLRQ. A helical transmembrane segment spans residues 284–304; sequence VIGFGSVKIVAFIAMVGILSI. Residues 305–323 lie on the Extracellular side of the membrane; it reads VAQTVFLSKLMRSLGNKNT. The chain crosses the membrane as a helical span at residues 324 to 344; it reads VLLGLGFQMLQLAWYGFGSQA. Residues 345 to 347 are Cytoplasmic-facing; the sequence is WMM. The helical transmembrane segment at 348 to 368 threads the bilayer; that stretch reads WAAGTVAAMSSITFPAVSALI. The Extracellular segment spans residues 369–389; sequence SRNAESDQQGVAQGIVTGIRG. Residues 390-410 form a helical membrane-spanning segment; that stretch reads LCNGLGPALYGFIFYMFHVEL. The Cytoplasmic segment spans residues 411 to 430; sequence SELGPKLNSDDDPLQGAFIP. A helical transmembrane segment spans residues 431 to 451; that stretch reads GPPFLFGACIVLMSFLVALFI. Topologically, residues 452 to 507 are extracellular; that stretch reads PEYRKTSGVQKHNNSTSGSLSTPPERGSDEDIEPLLQDSSIWELSFEEPGNQCTEL. Positions 459–473 are enriched in polar residues; that stretch reads GVQKHNNSTSGSLST. A disordered region spans residues 459-483; sequence GVQKHNNSTSGSLSTPPERGSDEDI. N-linked (GlcNAc...) asparagine glycosylation is found at Asn464 and Asn465.

The protein belongs to the major facilitator superfamily.

It is found in the membrane. The chain is Hippocampus abundant transcript-like protein 1 from Mus musculus (Mouse).